Here is a 213-residue protein sequence, read N- to C-terminus: ATP phosphoribosyltransferase (213 aa).

Belongs to the ATP phosphoribosyltransferase family. Short subfamily. Heteromultimer composed of HisG and HisZ subunits.

The protein resides in the cytoplasm. The enzyme catalyses 1-(5-phospho-beta-D-ribosyl)-ATP + diphosphate = 5-phospho-alpha-D-ribose 1-diphosphate + ATP. It participates in amino-acid biosynthesis; L-histidine biosynthesis; L-histidine from 5-phospho-alpha-D-ribose 1-diphosphate: step 1/9. Functionally, catalyzes the condensation of ATP and 5-phosphoribose 1-diphosphate to form N'-(5'-phosphoribosyl)-ATP (PR-ATP). Has a crucial role in the pathway because the rate of histidine biosynthesis seems to be controlled primarily by regulation of HisG enzymatic activity. The polypeptide is ATP phosphoribosyltransferase (Shouchella clausii (strain KSM-K16) (Alkalihalobacillus clausii)).